The primary structure comprises 299 residues: Oxygen-dependent coproporphyrinogen-III oxidase (299 aa).

S92 is a binding site for substrate. Residues H96 and H106 each contribute to the a divalent metal cation site. H106 functions as the Proton donor in the catalytic mechanism. 108–110 (NVR) contacts substrate. 2 residues coordinate a divalent metal cation: H145 and H175. An important for dimerization region spans residues 240–275 (YVEFNLVWDRGTLFGLQTGGRTESILMSMPPLVRWE). 258 to 260 (GGR) serves as a coordination point for substrate.

The protein belongs to the aerobic coproporphyrinogen-III oxidase family. In terms of assembly, homodimer. A divalent metal cation serves as cofactor.

The protein localises to the cytoplasm. It carries out the reaction coproporphyrinogen III + O2 + 2 H(+) = protoporphyrinogen IX + 2 CO2 + 2 H2O. It functions in the pathway porphyrin-containing compound metabolism; protoporphyrin-IX biosynthesis; protoporphyrinogen-IX from coproporphyrinogen-III (O2 route): step 1/1. Functionally, involved in the heme biosynthesis. Catalyzes the aerobic oxidative decarboxylation of propionate groups of rings A and B of coproporphyrinogen-III to yield the vinyl groups in protoporphyrinogen-IX. The chain is Oxygen-dependent coproporphyrinogen-III oxidase from Shigella dysenteriae serotype 1 (strain Sd197).